An 89-amino-acid chain; its full sequence is Small ribosomal subunit protein bS20 (89 aa).

This sequence belongs to the bacterial ribosomal protein bS20 family.

Binds directly to 16S ribosomal RNA. This Helicobacter pylori (strain ATCC 700392 / 26695) (Campylobacter pylori) protein is Small ribosomal subunit protein bS20.